We begin with the raw amino-acid sequence, 220 residues long: Protein GrpE (220 aa).

The protein belongs to the GrpE family. Homodimer.

It localises to the cytoplasm. In terms of biological role, participates actively in the response to hyperosmotic and heat shock by preventing the aggregation of stress-denatured proteins, in association with DnaK and GrpE. It is the nucleotide exchange factor for DnaK and may function as a thermosensor. Unfolded proteins bind initially to DnaJ; upon interaction with the DnaJ-bound protein, DnaK hydrolyzes its bound ATP, resulting in the formation of a stable complex. GrpE releases ADP from DnaK; ATP binding to DnaK triggers the release of the substrate protein, thus completing the reaction cycle. Several rounds of ATP-dependent interactions between DnaJ, DnaK and GrpE are required for fully efficient folding. The chain is Protein GrpE from Bartonella quintana (strain Toulouse) (Rochalimaea quintana).